Here is a 262-residue protein sequence, read N- to C-terminus: Putative BTB/POZ domain-containing protein L834 (262 aa).

The BTB domain maps to 16-86 (FDVVVELTDE…FYKKNIQPCI (71 aa)).

Belongs to the mimivirus BTB/WD family.

This Acanthamoeba polyphaga (Amoeba) protein is Putative BTB/POZ domain-containing protein L834.